A 2774-amino-acid polypeptide reads, in one-letter code: Teneurin-2 (2774 aa).

Positions 1–375 (MDVKDRRHRS…KPSKYCSWKC (375 aa)) constitute a Teneurin N-terminal domain. The Cytoplasmic segment spans residues 1-379 (MDVKDRRHRS…YCSWKCAALS (379 aa)). A phosphoserine mark is found at S90 and S124. Residues 111 to 271 (TGSDADSDTE…HHHSSANSLN (161 aa)) form a disordered region. The span at 141–155 (SSGLSSRENSALTLT) shows a compositional bias: polar residues. Residue T155 is modified to Phosphothreonine. At S157 the chain carries Phosphoserine. Residues 159–168 (NENKSDDDNG) show a composition bias toward basic and acidic residues. Low complexity predominate over residues 174–188 (TSSSSLLPSAQLPSS). Residues 202 to 211 (DSNTSHQIMD) show a composition bias toward polar residues. Residues 229–240 (SGPQQASSSGPP) are compositionally biased toward low complexity. The chain crosses the membrane as a helical span at residues 380–400 (AIAAALLLAILLAYFIAMHLL). The Extracellular portion of the chain corresponds to 401–2774 (GLNWQLQPAD…FLRQNEMGKR (2374 aa)). N-linked (GlcNAc...) asparagine glycosylation is found at N443 and N482. EGF-like domains lie at 575-603 (DCPRNCHGNGECVSGLCHCFPGFLGADCA), 605-634 (AACPVLCSGNGQYSKGTCQCYSGWKGAECD), 636-668 (PMNQCIDPSCGGHGSCIDGNCVCAAGYKGEHCE), 669-701 (EVDCLDPTCSSHGVCVNGECLCSPGWGGLNCEL), 702-735 (ARVQCPDQCSGHGTYLPDSGLCNCDPNWMGPDCS), 738-766 (VCSVDCGTHGVCIGGACRCEEGWTGAACD), 769-797 (VCHPRCIEHGTCKDGKCECREGWNGEHCT), and 808-841 (DGCPDLCNGNGRCTLGQNSWQCVCQTGWRGPGCN). Cystine bridges form between C576/C586, C580/C591, C593/C602, C611/C622, C624/C633, C640/C651, C645/C656, C658/C667, C672/C683, C677/C688, C690/C699, C710/C723, C725/C734, C739/C749, C743/C754, C756/C765, C770/C780, C774/C785, C787/C796, C810/C820, C814/C829, and C831/C840. Residues N925, N948, and N1267 are each glycosylated (N-linked (GlcNAc...) asparagine). 5 NHL repeats span residues 1272–1316 (LELR…VKSL), 1342–1386 (ARCG…NGII), 1401–1452 (LSCD…IAGR), 1474–1501 (LESASAIAISHTGVLYITETDEKKINRL), and 1530–1573 (CYSG…VSKN). Residues 1583-1602 (YEAASPGEQELYVFNADGIH) form a YD 1 repeat. An N-linked (GlcNAc...) asparagine glycan is attached at N1616. 3 YD repeats span residues 1619 to 1639 (YSADNDVTELIDNNGNSLKIR), 1682 to 1701 (YDGNTGLLATKSDETGWTTF), and 1702 to 1724 (YDYDHEGRLTNVTRPTGVVTSLH). Residues N1712, N1749, N1773, N1807, and N1892 are each glycosylated (N-linked (GlcNAc...) asparagine). YD repeat units follow at residues 1895-1914 (YFFNGRLAGLQRGAMSERTD), 1936-1954 (YLDKSMVLLLQSQRQYIFE), 1955-1975 (YDSSDRLHAVTMPSVARHSMS), 1982-1999 (YIRNIYNPPESNASVIFD), 2000-2021 (YSDDGRILKTSFLGTGRQVFYK), 2022-2039 (YGKLSKLSEIVYDSTAVT), 2042-2062 (YDETTGVLKMVNLQSGGFSCT), 2065-2085 (YRKVGPLVDKQIYRFSEEGMI), 2093-2113 (YHDNSFRIASIKPVISETPLP), 2119-2136 (YDEISGKVEHFGKFGVIY), 2137-2163 (YDINQIITTAVMTLSKHFDTHGRIKEV), 2165-2178 (YEMFRSLMYWMTVQ), 2179-2202 (YDSMGRVIKRELKLGPYANTTKYT), 2205-2225 (YDGDGQLQSVAVNDRPTWRYS), 2226-2246 (YDLNGNLHLLNPGNSARLMPL), 2248-2268 (YDLRDRITRLGDVQYKIDDDG), 2280-2300 (YNSKGLLTRAYNKASGWSVQY), and 2302-2322 (YDGVSRRASYKTNLGHHLQYF). An N-linked (GlcNAc...) asparagine glycan is attached at N1993. N-linked (GlcNAc...) asparagine glycosylation is present at N2197. N2337 carries N-linked (GlcNAc...) asparagine glycosylation. One copy of the YD 23 repeat lies at 2348–2389 (YDLQGHLFAMESSSGEEYYVASDNTGTPLAVFSINGLMIKQL). N2648 is a glycosylation site (N-linked (GlcNAc...) asparagine).

It belongs to the tenascin family. Teneurin subfamily. In terms of assembly, homodimer; disulfide-linked. Heterodimer with either TENM1 or TENM3. May also form heterodimer with TENM4. Interacts with ADGRL1 isoform 2. In terms of processing, derives from the membrane form by proteolytic processing. Post-translationally, derives from the plasma membrane form by proteolytic cleavage and translocates to the nucleus. Homophilic binding of the C-terminal extracellular domain stimulates its proteolytic cleavage and release in the cytoplasmic. Is subjected to rapid degradation by the proteasome pathway. In terms of tissue distribution, expressed in the brain (at protein level).

The protein localises to the cell membrane. The protein resides in the presynaptic cell membrane. Its subcellular location is the postsynaptic cell membrane. It is found in the endoplasmic reticulum. It localises to the golgi apparatus. The protein localises to the synapse. The protein resides in the cell projection. Its subcellular location is the dendritic spine. It is found in the filopodium. It localises to the growth cone. The protein localises to the nucleus. The protein resides in the PML body. Functionally, involved in neural development, regulating the establishment of proper connectivity within the nervous system. Acts as a ligand of the ADGRL1 and ADGRL3 receptors that are expressed at the surface of adjacent cells. Promotes the formation of filopodia and enlarged growth cone in neuronal cells. Mediates axon guidance and homophilic and heterophilic cell-cell adhesion. May function as a cellular signal transducer. Its function is as follows. Induces gene transcription inhibition. This chain is Teneurin-2 (Tenm2), found in Rattus norvegicus (Rat).